The primary structure comprises 384 residues: 5-amino-6-(D-ribitylamino)uracil--L-tyrosine 4-hydroxyphenyl transferase 2 (384 aa).

The Radical SAM core domain maps to 53 to 286; sequence VSYVVNRNIY…IAISRVILHT (234 aa). Residues Cys67, Cys71, and Cys74 each contribute to the [4Fe-4S] cluster site.

This sequence belongs to the radical SAM superfamily. CofH family. Consists of two subunits, CofG and CofH. The cofactor is [4Fe-4S] cluster.

It catalyses the reaction 5-amino-6-(D-ribitylamino)uracil + L-tyrosine + S-adenosyl-L-methionine = 5-amino-5-(4-hydroxybenzyl)-6-(D-ribitylimino)-5,6-dihydrouracil + 2-iminoacetate + 5'-deoxyadenosine + L-methionine + H(+). It functions in the pathway cofactor biosynthesis; coenzyme F0 biosynthesis. Catalyzes the radical-mediated synthesis of 5-amino-5-(4-hydroxybenzyl)-6-(D-ribitylimino)-5,6-dihydrouracil from 5-amino-6-(D-ribitylamino)uracil and L-tyrosine. In Methanosarcina mazei (strain ATCC BAA-159 / DSM 3647 / Goe1 / Go1 / JCM 11833 / OCM 88) (Methanosarcina frisia), this protein is 5-amino-6-(D-ribitylamino)uracil--L-tyrosine 4-hydroxyphenyl transferase 2.